A 326-amino-acid polypeptide reads, in one-letter code: Ficolin-1 (326 aa).

An N-terminal signal peptide occupies residues 1 to 29 (MELSGATMARGLAVLLVLFLHIKNLPAQA). In terms of domain architecture, Collagen-like spans 55-93 (GLPGAPGPKGEAGVIGERGERGLPGAPGKAGPVGPKGDR). Residues 72-111 (RGERGLPGAPGKAGPVGPKGDRGEKGMRGEKGDAGQSQSC) are disordered. The span at 77-89 (LPGAPGKAGPVGP) shows a compositional bias: low complexity. The span at 90–104 (KGDRGEKGMRGEKGD) shows a compositional bias: basic and acidic residues. Residues 109 to 326 (QSCATGPRNC…KVSEMKVRPA (218 aa)) enclose the Fibrinogen C-terminal domain. Disulfide bonds link Cys111-Cys139 and Cys118-Cys146. An a domain; contributes to trimerization region spans residues 115–154 (PRNCKDLLDRGYFLSGWHTIYLPDCRPLTVLCDMDTDGGG). The interval 155–243 (WTVFQRRMDG…LVLGAFVGGS (89 aa)) is b domain; contributes to trimerization. Positions 262, 264, 266, and 268 each coordinate Ca(2+). A disulfide bridge connects residues Cys270 and Cys283. 282–284 (DCH) serves as a coordination point for a carbohydrate. Residue Asn305 is glycosylated (N-linked (GlcNAc...) asparagine). The interval 317 to 326 (KVSEMKVRPA) is p domain.

This sequence belongs to the ficolin lectin family. As to quaternary structure, homotrimer. Interacts with elastin/ELN. Interacts (via Fibrinogen C-terminal domain) with FFAR2. Interacts with CRP; may regulate monocyte activation by FCN1. In terms of tissue distribution, peripheral blood leukocytes, monocytes and granulocytes. Also detected in spleen, lung, and thymus, may be due to the presence of tissue macrophages or trapped blood in these tissues. Not detected on lymphocytes.

The protein localises to the secreted. It localises to the cell membrane. Its function is as follows. Extracellular lectin functioning as a pattern-recognition receptor in innate immunity. Binds the sugar moieties of pathogen-associated molecular patterns (PAMPs) displayed on microbes and activates the lectin pathway of the complement system. May also activate monocytes through a G protein-coupled receptor, FFAR2, inducing the secretion of interleukin-8/IL-8. Binds preferentially to 9-O-acetylated 2-6-linked sialic acid derivatives and to various glycans containing sialic acid engaged in a 2-3 linkage. The chain is Ficolin-1 (FCN1) from Homo sapiens (Human).